A 65-amino-acid polypeptide reads, in one-letter code: Large ribosomal subunit protein bL31 (65 aa).

Residues cysteine 16, cysteine 18, cysteine 36, and cysteine 39 each coordinate Zn(2+).

The protein belongs to the bacterial ribosomal protein bL31 family. Type A subfamily. In terms of assembly, part of the 50S ribosomal subunit. The cofactor is Zn(2+).

In terms of biological role, binds the 23S rRNA. This is Large ribosomal subunit protein bL31 from Geotalea uraniireducens (strain Rf4) (Geobacter uraniireducens).